The primary structure comprises 81 residues: Large ribosomal subunit protein bL31 (81 aa).

It belongs to the bacterial ribosomal protein bL31 family. Type A subfamily. As to quaternary structure, part of the 50S ribosomal subunit.

In terms of biological role, binds the 23S rRNA. The chain is Large ribosomal subunit protein bL31 from Synechocystis sp. (strain ATCC 27184 / PCC 6803 / Kazusa).